The chain runs to 308 residues: MNLEAFILGCGGMMPLPYRHLTSVLLRREGDLFLFDCGEGTQVALRRLNLRWKRINAIFISHTHADHITGLPGLLMLSSQVDREEPLYIIGPPKVAEYVETSRKVLDMYINYEIIVKEIREPGVVYSTEEFQVRSFWLDHTKPCMGYTFEEFERPGEFNPEAARALNVPCGPLWSKLQGGNEVVSADGKTIRPQDVMGPKRKGRKFSFVTDTKYLPSIAQEVKYSDFFVCEGMFEKGMEKDAAEKKHMTCTQAAQIAKDAEVKKMALIHYSPRYTDNELKVLLDHAREVFPETILSKDRMNIQLEYED.

Residues H62, H64, D66, H67, H140, D211, and H269 each contribute to the Zn(2+) site. Catalysis depends on D66, which acts as the Proton acceptor.

This sequence belongs to the RNase Z family. Homodimer. Requires Zn(2+) as cofactor.

It carries out the reaction Endonucleolytic cleavage of RNA, removing extra 3' nucleotides from tRNA precursor, generating 3' termini of tRNAs. A 3'-hydroxy group is left at the tRNA terminus and a 5'-phosphoryl group is left at the trailer molecule.. In terms of biological role, zinc phosphodiesterase, which displays some tRNA 3'-processing endonuclease activity. Probably involved in tRNA maturation, by removing a 3'-trailer from precursor tRNA. In Treponema denticola (strain ATCC 35405 / DSM 14222 / CIP 103919 / JCM 8153 / KCTC 15104), this protein is Ribonuclease Z.